Consider the following 259-residue polypeptide: Phosphatidylglycerol--prolipoprotein diacylglyceryl transferase (259 aa).

Transmembrane regions (helical) follow at residues 12–32 (LSLH…VYLA), 46–66 (IIDF…IYYV), 83–103 (IWNG…VLFV), and 109–129 (VLNP…AQAI). A 1,2-diacyl-sn-glycero-3-phospho-(1'-sn-glycerol) is bound at residue Arg-131. 3 helical membrane-spanning segments follow: residues 167-187 (VPTF…IMVW), 194-214 (LLDG…RLVI), and 226-246 (GIRV…VFIF).

The protein belongs to the Lgt family.

Its subcellular location is the cell membrane. The enzyme catalyses L-cysteinyl-[prolipoprotein] + a 1,2-diacyl-sn-glycero-3-phospho-(1'-sn-glycerol) = an S-1,2-diacyl-sn-glyceryl-L-cysteinyl-[prolipoprotein] + sn-glycerol 1-phosphate + H(+). Its pathway is protein modification; lipoprotein biosynthesis (diacylglyceryl transfer). Its function is as follows. Catalyzes the transfer of the diacylglyceryl group from phosphatidylglycerol to the sulfhydryl group of the N-terminal cysteine of a prolipoprotein, the first step in the formation of mature lipoproteins. The protein is Phosphatidylglycerol--prolipoprotein diacylglyceryl transferase of Streptococcus equi subsp. zooepidemicus (strain H70).